The following is a 25-amino-acid chain: Hypotensin-2 (25 aa).

Residues A1–A25 form a disordered region. S6 carries the post-translational modification Phosphoserine. Residues D11 to A25 show a composition bias toward basic and acidic residues.

It belongs to the non-disulfide-bridged peptide (NDBP) superfamily. As to expression, expressed by the venom gland.

It is found in the secreted. In terms of biological role, agonist of the B2 bradykinin receptor (BDKRB2). Potentiates the hypotensive effect of bradykinin (BK) and induces a direct vasorelaxing effect, independently of BK, by endothelium- and nitric oxide (NO)-dependent mechanisms in rat aortic ring preparations. Does not inhibit the angiotensin-converting enzyme (ACE). Also exerts proangiogenic, antiinflammatory, and antifibrogenic activities. Does not inhibit the angiotensin-converting enzyme (ACE) but weakly increases its activity, and weakly inhibits neprilysin (NEP) in a non-competitive manner. Exerts intermediate cytotoxicity and pro-inflammatory effects on mouse macrophages, and increases the phagocytic activity of these murine cells. Presents weak hemolytic activity at physiological concentrations (micromolar range), and weak lactate dehydrogenase (LDH) release from mast cells. Does not induce mast cell degranulation, and antimicrobial effects. In vivo, causes intense pain (but no edema formation), when injected in mice hind paws. Also induces discomfort and anxiety in mice, as it moderately diminishes locomotion and moderately increases rearing behavior. The protein is Hypotensin-2 of Tityus serrulatus (Brazilian scorpion).